A 77-amino-acid polypeptide reads, in one-letter code: Beta-defensin 135 (77 aa).

An N-terminal signal peptide occupies residues 1–24 (MATRSVLLALVVLNLLFYVPPGRS). 3 cysteine pairs are disulfide-bonded: C37–C64, C44–C58, and C48–C65.

It belongs to the beta-defensin family.

The protein resides in the secreted. Functionally, has antibacterial activity. The protein is Beta-defensin 135 (DEFB135) of Homo sapiens (Human).